Reading from the N-terminus, the 190-residue chain is Protein GrpE (190 aa).

Residues 1-26 are compositionally biased toward basic and acidic residues; it reads MADKEKDAVIVDETEHVDVDSKESKK. The interval 1–31 is disordered; that stretch reads MADKEKDAVIVDETEHVDVDSKESKKEKKTK.

It belongs to the GrpE family. Homodimer.

The protein localises to the cytoplasm. Participates actively in the response to hyperosmotic and heat shock by preventing the aggregation of stress-denatured proteins, in association with DnaK and GrpE. It is the nucleotide exchange factor for DnaK and may function as a thermosensor. Unfolded proteins bind initially to DnaJ; upon interaction with the DnaJ-bound protein, DnaK hydrolyzes its bound ATP, resulting in the formation of a stable complex. GrpE releases ADP from DnaK; ATP binding to DnaK triggers the release of the substrate protein, thus completing the reaction cycle. Several rounds of ATP-dependent interactions between DnaJ, DnaK and GrpE are required for fully efficient folding. In Acholeplasma laidlawii (strain PG-8A), this protein is Protein GrpE.